We begin with the raw amino-acid sequence, 934 residues long: Phosphoenolpyruvate carboxylase (934 aa).

Catalysis depends on residues H161 and K593.

It belongs to the PEPCase type 1 family. It depends on Mg(2+) as a cofactor.

It carries out the reaction oxaloacetate + phosphate = phosphoenolpyruvate + hydrogencarbonate. Functionally, forms oxaloacetate, a four-carbon dicarboxylic acid source for the tricarboxylic acid cycle. The polypeptide is Phosphoenolpyruvate carboxylase (ppc) (Mycobacterium leprae (strain TN)).